The sequence spans 998 residues: Sensor histidine kinase AruS (998 aa).

3 disordered regions span residues 27 to 82, 154 to 198, and 224 to 245; these read ERRP…HARA, RQAG…LPAG, and RQHPALAGRQRARLSAPRRQPR. A compositionally biased stretch (low complexity) spans 40–49; the sequence is GEAAVRRAGL. Over residues 161–183 the composition is skewed to basic residues; the sequence is HRLHRPRTTHRHAVRRAPGRRRE. 2 helical membrane passes run 264-284 and 395-415; these read VLLFSLCFTVLAGAVQLFFEY and ASLLWMGSFLCGLAVALSWLF. Positions 417 to 473 constitute an HAMP domain; it reads SLVTRHLWRMSEFAGHIAEGDLQQPLRLDKVDRERDEIDAVAAALEDMRQALRTDRR. A Histidine kinase domain is found at 513-734; sequence TMSHEIRTPL…TFWFEIELAL (222 aa). His-516 carries the phosphohistidine; by autocatalysis modification. The 119-residue stretch at 751–869 folds into the Response regulatory domain; it reads EVLLVEDVAL…ELRRALGEVG (119 aa). Asp-800 carries the post-translational modification 4-aspartylphosphate. The HPt domain maps to 894-987; the sequence is GRHKLAGLLG…RDGAEALRRA (94 aa). His-933 is modified (phosphohistidine).

In terms of processing, autophosphorylated. Activation may require a sequential transfer of a phosphate group from a His in the primary transmitter domain, to an Asp in the receiver domain and to a His in the secondary transmitter domain.

Its subcellular location is the cell membrane. The catalysed reaction is ATP + protein L-histidine = ADP + protein N-phospho-L-histidine.. It participates in amino-acid degradation; L-arginine degradation [regulation]. Member of the two-component regulatory system AruS/AruR, which is involved in the regulation of the arginine transaminase (ATA) pathway in response to exogeneous L-arginine. Probably functions as a sensor kinase that phosphorylates AruR. This is Sensor histidine kinase AruS (aruS) from Pseudomonas aeruginosa (strain ATCC 15692 / DSM 22644 / CIP 104116 / JCM 14847 / LMG 12228 / 1C / PRS 101 / PAO1).